A 369-amino-acid chain; its full sequence is DNA replication and repair protein RecF (369 aa).

30-37 (GDNGSGKT) is a binding site for ATP.

This sequence belongs to the RecF family.

Its subcellular location is the cytoplasm. In terms of biological role, the RecF protein is involved in DNA metabolism; it is required for DNA replication and normal SOS inducibility. RecF binds preferentially to single-stranded, linear DNA. It also seems to bind ATP. In Pseudomonas aeruginosa (strain LESB58), this protein is DNA replication and repair protein RecF.